Consider the following 204-residue polypeptide: Thymidylate kinase (204 aa).

The protein belongs to the thymidylate kinase family. Homodimer; the dimer arrangement is orthogonal and not antiparallel as in human enzyme.

The catalysed reaction is dTMP + ATP = dTDP + ADP. It participates in pyrimidine metabolism; dTTP biosynthesis. Its function is as follows. Poxvirus TMP kinase is able to phosphorylate dTMP, dUMP and also dGMP from any purine and pyrimidine nucleoside triphosphate. The large substrate specificity is explained by the presence of a canal connecting the edge of the dimer interface to the TMP base binding pocket, canal not found in the human homolog. The polypeptide is Thymidylate kinase (OPG178) (Cynomys gunnisoni (Gunnison's prairie dog)).